Here is a 465-residue protein sequence, read N- to C-terminus: GTPase Der (465 aa).

2 EngA-type G domains span residues 3-167 and 179-352; these read PLVA…PEEG and IRIA…ESAN. GTP is bound by residues 9-16, 57-61, 119-122, 185-192, 232-236, and 297-300; these read GRPNVGKS, DTGGI, NKID, DTAGL, and NKWD. The KH-like domain maps to 353–437; it reads KTFTTSEVNK…PVSFIFREGT (85 aa).

This sequence belongs to the TRAFAC class TrmE-Era-EngA-EngB-Septin-like GTPase superfamily. EngA (Der) GTPase family. As to quaternary structure, associates with the 50S ribosomal subunit.

GTPase that plays an essential role in the late steps of ribosome biogenesis. The chain is GTPase Der from Stenotrophomonas maltophilia (strain K279a).